The sequence spans 403 residues: Tyrosine--tRNA ligase (403 aa).

The short motif at 42 to 51 (PTAPDLHLGH) is the 'HIGH' region element. The short motif at 226-230 (KMSKS) is the 'KMSKS' region element. An ATP-binding site is contributed by lysine 229. Residues 336-396 (MPISAVLNKA…GKKAFGRITL (61 aa)) form the S4 RNA-binding domain.

It belongs to the class-I aminoacyl-tRNA synthetase family. TyrS type 2 subfamily. As to quaternary structure, homodimer.

It is found in the cytoplasm. The catalysed reaction is tRNA(Tyr) + L-tyrosine + ATP = L-tyrosyl-tRNA(Tyr) + AMP + diphosphate + H(+). Functionally, catalyzes the attachment of tyrosine to tRNA(Tyr) in a two-step reaction: tyrosine is first activated by ATP to form Tyr-AMP and then transferred to the acceptor end of tRNA(Tyr). This chain is Tyrosine--tRNA ligase, found in Pseudomonas syringae pv. tomato (strain ATCC BAA-871 / DC3000).